The following is a 93-amino-acid chain: uncharacterized protein (93 aa).

The signal sequence occupies residues 1-11 (MALMVLMALVG). Cys12 is lipidated: N-palmitoyl cysteine. Cys12 is lipidated: S-diacylglycerol cysteine.

The protein resides in the cell membrane. This is an uncharacterized protein from Escherichia coli O6:K15:H31 (strain 536 / UPEC).